Reading from the N-terminus, the 288-residue chain is Fe-S cluster assembly protein dre2 (288 aa).

The tract at residues 1 to 127 (MSSSVLVLTS…LSRPNQVEAV (127 aa)) is N-terminal SAM-like domain. The segment at 128-177 (PIKLSNKNGQSASKNKILDFLKSDKENLISGDDDQELIDEDELLDESAHD) is linker. [2Fe-2S] cluster contacts are provided by C185, C196, C199, and C201. A fe-S binding site A region spans residues 185 to 201 (CKPEPGKKKRACKNCTC). Residues C244, C247, C255, and C258 each contribute to the [4Fe-4S] cluster site. 2 consecutive short sequence motifs (cx2C motif) follow at residues 244–247 (CGNC) and 255–258 (CSGC). The interval 244–258 (CGNCYLGDAFRCSGC) is fe-S binding site B.

It belongs to the anamorsin family. As to quaternary structure, monomer. Interacts with tah18. Interacts with tim40. The cofactor is [2Fe-2S] cluster. [4Fe-4S] cluster is required as a cofactor.

The protein resides in the cytoplasm. Its subcellular location is the mitochondrion intermembrane space. Its function is as follows. Component of the cytosolic iron-sulfur (Fe-S) protein assembly (CIA) machinery required for the maturation of extramitochondrial Fe-S proteins. Part of an electron transfer chain functioning in an early step of cytosolic Fe-S biogenesis, facilitating the de novo assembly of a [4Fe-4S] cluster on the scaffold complex cfd1-nbp35. Electrons are transferred to dre2 from NADPH via the FAD- and FMN-containing protein tah18. Tah18-dre2 are also required for the assembly of the diferric tyrosyl radical cofactor of ribonucleotide reductase (RNR), probably by providing electrons for reduction during radical cofactor maturation in the catalytic small subunit suc22. The chain is Fe-S cluster assembly protein dre2 from Schizosaccharomyces pombe (strain 972 / ATCC 24843) (Fission yeast).